Reading from the N-terminus, the 343-residue chain is MSNYQFTKPAGPFRLSELAKISGATLYEGKGETFTVSGLAKLSEATSNDLVMLHQKKYVKELKNTAARSCIIGPDYVKFAPDSMYLLVHPNPYKAFALIAQAFYPSEKSSSFIAPSAKIESTALIGSDCSIAHGAYVGNHARIGKRCKIGVNTYIGDGVTIGDNCIIEDNVSIRHAVIGSNVVVYPGARIGQDGFGFASDAEGHYKIPHAGGVIIGNDVEIGANTCIDRGSLGNTVIEDWCRLDNLVQIGHNVKIGKGSIIVAQVGIAGSTELGEHVTLAGQVGVIGHLKIGKGATVLTCSKVLRNVQPGDRVIGYPAISISDWQKQIRFLKTAIKSKNPLKS.

The Proton acceptor role is filled by His-251.

This sequence belongs to the transferase hexapeptide repeat family. LpxD subfamily. As to quaternary structure, homotrimer.

It carries out the reaction a UDP-3-O-[(3R)-3-hydroxyacyl]-alpha-D-glucosamine + a (3R)-hydroxyacyl-[ACP] = a UDP-2-N,3-O-bis[(3R)-3-hydroxyacyl]-alpha-D-glucosamine + holo-[ACP] + H(+). It functions in the pathway bacterial outer membrane biogenesis; LPS lipid A biosynthesis. Its function is as follows. Catalyzes the N-acylation of UDP-3-O-acylglucosamine using 3-hydroxyacyl-ACP as the acyl donor. Is involved in the biosynthesis of lipid A, a phosphorylated glycolipid that anchors the lipopolysaccharide to the outer membrane of the cell. The polypeptide is UDP-3-O-acylglucosamine N-acyltransferase 2 (Legionella pneumophila (strain Paris)).